We begin with the raw amino-acid sequence, 155 residues long: Small ribosomal subunit protein uS7 (155 aa).

The protein belongs to the universal ribosomal protein uS7 family. As to quaternary structure, part of the 30S ribosomal subunit. Contacts proteins S9 and S11.

One of the primary rRNA binding proteins, it binds directly to 16S rRNA where it nucleates assembly of the head domain of the 30S subunit. Is located at the subunit interface close to the decoding center, probably blocks exit of the E-site tRNA. This is Small ribosomal subunit protein uS7 from Helicobacter acinonychis (strain Sheeba).